The following is a 675-amino-acid chain: DNA ligase 1 (675 aa).

Residues 34–38, 83–84, and Glu-114 contribute to the NAD(+) site; these read DFEYD and SL. Catalysis depends on Lys-116, which acts as the N6-AMP-lysine intermediate. Residues Arg-137, Glu-177, Lys-295, and Lys-319 each contribute to the NAD(+) site. Cys-413, Cys-416, Cys-431, and Cys-436 together coordinate Zn(2+). The BRCT domain maps to 596–675; it reads NSGSALAGKT…AEFLRLLSGG (80 aa).

Belongs to the NAD-dependent DNA ligase family. LigA subfamily. The cofactor is Mg(2+). Mn(2+) serves as cofactor.

The catalysed reaction is NAD(+) + (deoxyribonucleotide)n-3'-hydroxyl + 5'-phospho-(deoxyribonucleotide)m = (deoxyribonucleotide)n+m + AMP + beta-nicotinamide D-nucleotide.. Functionally, DNA ligase that catalyzes the formation of phosphodiester linkages between 5'-phosphoryl and 3'-hydroxyl groups in double-stranded DNA using NAD as a coenzyme and as the energy source for the reaction. It is essential for DNA replication and repair of damaged DNA. The sequence is that of DNA ligase 1 from Opitutus terrae (strain DSM 11246 / JCM 15787 / PB90-1).